The chain runs to 275 residues: Light-independent protochlorophyllide reductase iron-sulfur ATP-binding protein (275 aa).

ATP contacts are provided by residues 12–17 and K41; that span reads GIGKST. Residue S16 participates in Mg(2+) binding. C97 and C131 together coordinate [4Fe-4S] cluster. Residue 182–183 coordinates ATP; the sequence is NR.

The protein belongs to the NifH/BchL/ChlL family. Homodimer. Protochlorophyllide reductase is composed of three subunits; BchL, BchN and BchB. Requires [4Fe-4S] cluster as cofactor.

It carries out the reaction chlorophyllide a + oxidized 2[4Fe-4S]-[ferredoxin] + 2 ADP + 2 phosphate = protochlorophyllide a + reduced 2[4Fe-4S]-[ferredoxin] + 2 ATP + 2 H2O. The protein operates within porphyrin-containing compound metabolism; bacteriochlorophyll biosynthesis (light-independent). Functionally, component of the dark-operative protochlorophyllide reductase (DPOR) that uses Mg-ATP and reduced ferredoxin to reduce ring D of protochlorophyllide (Pchlide) to form chlorophyllide a (Chlide). This reaction is light-independent. The L component serves as a unique electron donor to the NB-component of the complex, and binds Mg-ATP. This chain is Light-independent protochlorophyllide reductase iron-sulfur ATP-binding protein, found in Chlorobium phaeovibrioides (strain DSM 265 / 1930) (Prosthecochloris vibrioformis (strain DSM 265)).